A 1333-amino-acid chain; its full sequence is DNA-directed RNA polymerase subunit beta' (1333 aa).

Zn(2+) contacts are provided by Cys60, Cys62, Cys75, and Cys78. Mg(2+)-binding residues include Asp535, Asp537, and Asp539. Positions 901, 983, 990, and 993 each coordinate Zn(2+).

The protein belongs to the RNA polymerase beta' chain family. In terms of assembly, the RNAP catalytic core consists of 2 alpha, 1 beta, 1 beta' and 1 omega subunit. When a sigma factor is associated with the core the holoenzyme is formed, which can initiate transcription. It depends on Mg(2+) as a cofactor. The cofactor is Zn(2+).

It carries out the reaction RNA(n) + a ribonucleoside 5'-triphosphate = RNA(n+1) + diphosphate. Its function is as follows. DNA-dependent RNA polymerase catalyzes the transcription of DNA into RNA using the four ribonucleoside triphosphates as substrates. The polypeptide is DNA-directed RNA polymerase subunit beta' (Corynebacterium glutamicum (strain ATCC 13032 / DSM 20300 / JCM 1318 / BCRC 11384 / CCUG 27702 / LMG 3730 / NBRC 12168 / NCIMB 10025 / NRRL B-2784 / 534)).